The primary structure comprises 288 residues: MAEITAKMVSDLRVATGLGMMECKKALVEAEGDFAKAEEILRIKSGSKASKMAGRLAAEGIIGSYVEGGVGALVEVNCETDFVAKDPTFIALANAAAKAVAIANPADVEALAAVEVDGQQVEEIRKAAIAKLGENMTIRRFVRYQTEGAISTYLHGAKIGVIVDFTGPEQVGKDVAMHVAASKPICVSKDQVSAETLDQERKIYSAQAAESGKPADIVAKMVEGRINKFLAEVTLLGQPFVKNPDVTVEKLLAEQKASVKAFAMFVVGEGIEKKVVDYAAEVAAAAKL.

Positions Thr80–Val83 are involved in Mg(2+) ion dislocation from EF-Tu.

It belongs to the EF-Ts family.

It localises to the cytoplasm. Functionally, associates with the EF-Tu.GDP complex and induces the exchange of GDP to GTP. It remains bound to the aminoacyl-tRNA.EF-Tu.GTP complex up to the GTP hydrolysis stage on the ribosome. The polypeptide is Elongation factor Ts (Chromobacterium violaceum (strain ATCC 12472 / DSM 30191 / JCM 1249 / CCUG 213 / NBRC 12614 / NCIMB 9131 / NCTC 9757 / MK)).